A 225-amino-acid polypeptide reads, in one-letter code: Alpha-tubulin N-acetyltransferase 1 (225 aa).

An N-acetyltransferase domain is found at 1–190 (MEFPFDVDAL…NNFVIFEGFF (190 aa)). N6-acetyllysine; by autocatalysis is present on Lys56. Position 124–137 (124–137 (FYIHESLQRHGHGR)) interacts with acetyl-CoA. Lys146 carries the post-translational modification N6-acetyllysine; by autocatalysis. 160–169 (SQKLLKFLNK) lines the acetyl-CoA pocket. Positions 195 to 225 (PPARKLPPKRAEGDIKPYSSSDRESGLPQGW) are disordered. A compositionally biased stretch (basic and acidic residues) spans 203–219 (KRAEGDIKPYSSSDRES). Lys210 carries the post-translational modification N6-acetyllysine; by autocatalysis.

It belongs to the acetyltransferase ATAT1 family. Component of the BBSome complex. Interacts with AP2 alpha-adaptins, including AP2A2, but not with AP1 gamma-adaptin (AP1G1/AP1G2); this interaction is required for efficient alpha-tubulin acetylation, hence clathrin-coated pits are sites of microtubule acetylation. Post-translationally, autoacetylation strongly increases tubulin acetylation.

The protein resides in the cytoplasm. It localises to the membrane. Its subcellular location is the clathrin-coated pit. It is found in the cell junction. The protein localises to the focal adhesion. The protein resides in the cell projection. It localises to the axon. Its subcellular location is the cytoskeleton. It is found in the spindle. The enzyme catalyses L-lysyl-[alpha-tubulin] + acetyl-CoA = N(6)-acetyl-L-lysyl-[alpha-tubulin] + CoA + H(+). Specifically acetylates 'Lys-40' in alpha-tubulin on the lumenal side of microtubules. Promotes microtubule destabilization and accelerates microtubule dynamics; this activity may be independent of acetylation activity. Acetylates alpha-tubulin with a slow enzymatic rate, due to a catalytic site that is not optimized for acetyl transfer. Enters the microtubule through each end and diffuses quickly throughout the lumen of microtubules. Acetylates only long/old microtubules because of its slow acetylation rate since it does not have time to act on dynamically unstable microtubules before the enzyme is released. Required for normal sperm flagellar function. Promotes directional cell locomotion and chemotaxis, through AP2A2-dependent acetylation of alpha-tubulin at clathrin-coated pits that are concentrated at the leading edge of migrating cells. May facilitate primary cilium assembly. The protein is Alpha-tubulin N-acetyltransferase 1 of Bos taurus (Bovine).